Here is a 547-residue protein sequence, read N- to C-terminus: Glucose-6-phosphate isomerase 2 (547 aa).

Glu351 acts as the Proton donor in catalysis. Active-site residues include His382 and Lys508.

The protein belongs to the GPI family.

It localises to the cytoplasm. The catalysed reaction is alpha-D-glucose 6-phosphate = beta-D-fructose 6-phosphate. It participates in carbohydrate biosynthesis; gluconeogenesis. It functions in the pathway carbohydrate degradation; glycolysis; D-glyceraldehyde 3-phosphate and glycerone phosphate from D-glucose: step 2/4. Catalyzes the reversible isomerization of glucose-6-phosphate to fructose-6-phosphate. This chain is Glucose-6-phosphate isomerase 2, found in Neisseria meningitidis serogroup A / serotype 4A (strain DSM 15465 / Z2491).